Consider the following 349-residue polypeptide: Nucleoporin SEH1 (349 aa).

WD repeat units lie at residues 7–46 (GHDD…SNWE), 53–94 (AHDS…EECS), 106–147 (DSKG…DLRS), 153–192 (EMKV…EQAI), and 210–253 (GHKS…SPLA). Ser257 is modified (phosphoserine). Residues 263-285 (MFDNSADVDMDAQGRSDSNTEEK) form a disordered region. A compositionally biased stretch (basic and acidic residues) spans 274–285 (AQGRSDSNTEEK). A WD 6 repeat occupies 302 to 341 (DHNGEVWSVSWNLTGTILSSAGDDGKVRLWKATYSNEFKC).

The protein belongs to the WD repeat SEC13 family. In terms of assembly, component of the nuclear pore complex (NPC). NPC constitutes the exclusive means of nucleocytoplasmic transport. NPCs allow the passive diffusion of ions and small molecules and the active, nuclear transport receptor-mediated bidirectional transport of macromolecules such as proteins, RNAs, ribonucleoparticles (RNPs), and ribosomal subunits across the nuclear envelope. Due to its 8-fold rotational symmetry, all subunits are present with 8 copies or multiples thereof. SEH1 is part of the heptameric 0.5 MDa autoassembling NUP84 NPC subcomplex (NUP84, NUP85, NUP120, NUP133, NUP145C, SEC13 and SEH1). Component of the SEA complex composed of at least IML1/SEA1, RTC1/SEA2, MTC5/SEA3, NPR2, NPR3, SEA4, SEC13 and SEH1.

The protein localises to the nucleus. It localises to the nuclear pore complex. Its subcellular location is the nucleus membrane. The protein resides in the vacuole membrane. Functionally, functions as a component of the nuclear pore complex (NPC). NPC components, collectively referred to as nucleoporins (NUPs), can play the role of both NPC structural components and of docking or interaction partners for transiently associated nuclear transport factors. Involved in nuclear poly(A)+ RNA export and NPC biogenesis. It is also required for normal nuclear morphology. Component of the SEA complex which coats the vacuolar membrane and is involved in intracellular trafficking, autophagy, response to nitrogen starvation, and amino acid biogenesis. The protein is Nucleoporin SEH1 (SEH1) of Saccharomyces cerevisiae (strain ATCC 204508 / S288c) (Baker's yeast).